We begin with the raw amino-acid sequence, 274 residues long: GCN5-related N-acetyltransferase 7, chloroplastic (274 aa).

A chloroplast-targeting transit peptide spans 1-65 (MAFLCSSLPS…STFVISESVS (65 aa)). Residues 75–267 (LRVRTFNELN…QRLLLWLALP (193 aa)) enclose the N-acetyltransferase domain. Residues 189-191 (VCV), 197-202 (RNGVGY), 228-230 (NEA), and Y235 contribute to the acetyl-CoA site. Residue Y235 is the Proton donor of the active site.

It belongs to the acetyltransferase family. GNAT subfamily. Oligomer. Autoacetylated. In terms of tissue distribution, expressed in green tissues.

The protein localises to the plastid. It localises to the chloroplast. It catalyses the reaction an N-terminal L-alpha-aminoacyl-[protein] + acetyl-CoA = N-terminal N(alpha)-acetyl-L-alpha-aminoacyl-[protein] + CoA + H(+). It carries out the reaction L-lysyl-[protein] + acetyl-CoA = N(6)-acetyl-L-lysyl-[protein] + CoA + H(+). The enzyme catalyses N-terminal L-alanyl-[protein] + acetyl-CoA = N-terminal N(alpha)-acetyl-L-alanyl-[protein] + CoA + H(+). The catalysed reaction is N-terminal L-seryl-[protein] + acetyl-CoA = N-terminal N(alpha)-acetyl-L-seryl-[protein] + CoA + H(+). It catalyses the reaction N-terminal L-threonyl-[protein] + acetyl-CoA = N-terminal N(alpha)-acetyl-L-threonyl-[protein] + CoA + H(+). It carries out the reaction N-terminal L-methionyl-[protein] + acetyl-CoA = N-terminal N(alpha)-acetyl-L-methionyl-[protein] + CoA + H(+). The enzyme catalyses N-terminal L-prolyl-[protein] + acetyl-CoA = N-terminal N(alpha)-acetyl-L-prolyl-[protein] + CoA + H(+). The catalysed reaction is N-terminal L-valyl-[protein] + acetyl-CoA = N-terminal N(alpha)-acetyl-L-valyl-[protein] + CoA + H(+). In terms of biological role, protein acetyltransferase with dual specificity triggering both N-alpha-acetylation (NTA), with a large spectrum of modified N-termini, including methionine, alanine, serine, threonine and to a lower extent valine and proline as substrates, and epsilon-lysine acetylation (KA). The sequence is that of GCN5-related N-acetyltransferase 7, chloroplastic from Arabidopsis thaliana (Mouse-ear cress).